A 386-amino-acid chain; its full sequence is L-prolyl-[peptidyl-carrier protein] dehydrogenase (386 aa).

FAD-binding positions include 125–134 (NAATEPDAGS) and 158–160 (FIT). Residue glutamate 244 is the Proton acceptor of the active site. FAD-binding positions include arginine 270, glutamine 281, 338 to 342 (QTFGG), and 367 to 369 (TND).

It belongs to the acyl-CoA dehydrogenase family. Requires FAD as cofactor.

It catalyses the reaction L-prolyl-[peptidyl-carrier protein] + 2 oxidized [electron-transfer flavoprotein] + H(+) = (1H-pyrrole-2-carbonyl)-[peptidyl-carrier protein] + 2 reduced [electron-transfer flavoprotein]. The protein operates within antibiotic biosynthesis; prodigiosin biosynthesis. Involved in the biosynthesis of 4-methoxy-2,2'-bipyrrole-5-carbaldehyde (MBC), one of the terminal products involved in the biosynthesis of the red antibiotic prodigiosin (Pig). Catalyzes the desaturation of the L-prolyl-[PigG] to yield 1H-pyrrole-2-carbonyl-[PigG]. The polypeptide is L-prolyl-[peptidyl-carrier protein] dehydrogenase (Serratia sp. (strain ATCC 39006) (Prodigiosinella confusarubida)).